The chain runs to 245 residues: tRNA (guanine-N(1)-)-methyltransferase (245 aa).

S-adenosyl-L-methionine contacts are provided by residues G111 and 131–136 (MGDYVL).

This sequence belongs to the RNA methyltransferase TrmD family. In terms of assembly, homodimer.

The protein resides in the cytoplasm. It catalyses the reaction guanosine(37) in tRNA + S-adenosyl-L-methionine = N(1)-methylguanosine(37) in tRNA + S-adenosyl-L-homocysteine + H(+). Functionally, specifically methylates guanosine-37 in various tRNAs. This is tRNA (guanine-N(1)-)-methyltransferase from Staphylococcus epidermidis (strain ATCC 12228 / FDA PCI 1200).